Consider the following 156-residue polypeptide: Small ribosomal subunit protein uS7 (156 aa).

Belongs to the universal ribosomal protein uS7 family. In terms of assembly, part of the 30S ribosomal subunit. Contacts proteins S9 and S11.

Functionally, one of the primary rRNA binding proteins, it binds directly to 16S rRNA where it nucleates assembly of the head domain of the 30S subunit. Is located at the subunit interface close to the decoding center, probably blocks exit of the E-site tRNA. The chain is Small ribosomal subunit protein uS7 from Aster yellows witches'-broom phytoplasma (strain AYWB).